Here is a 314-residue protein sequence, read N- to C-terminus: Taste receptor type 2 member 42 (314 aa).

The Extracellular portion of the chain corresponds to 1–7; the sequence is MATELDK. The chain crosses the membrane as a helical span at residues 8–28; the sequence is IFLILAIAEFIISMLGNVFIG. Residues 29 to 50 lie on the Cytoplasmic side of the membrane; it reads LVNCSEGIKNQKVFSADFILTC. The helical transmembrane segment at 51 to 71 threads the bilayer; sequence LAISTIGQLLVILFDSFLVGL. Residues 72 to 101 are Extracellular-facing; sequence ASHLYTTYRLGKTVIMLWHMTNHLTTWLAT. The chain crosses the membrane as a helical span at residues 102–122; sequence CLSIFYFFKIAHFPHSLFLWL. At 123–127 the chain is on the cytoplasmic side; the sequence is RWRMN. The helical transmembrane segment at 128 to 148 threads the bilayer; sequence GMIVMLLILSLFLLIFDSLVL. Residues 149-187 lie on the Extracellular side of the membrane; the sequence is EIFIDISLNIIDKSNLTLYLDESKTLYDKLSILKTLLSL. Asparagine 163 carries an N-linked (GlcNAc...) asparagine glycan. Residues 188–208 traverse the membrane as a helical segment; the sequence is TSFIPFSLFLTSLLFLFLSLV. Topologically, residues 209-238 are cytoplasmic; that stretch reads RHTRNLKLSSLGSRDSSTEAHRRAMKMVMS. A helical membrane pass occupies residues 239–259; the sequence is FLFLFIVHFFSLQVANWIFFM. Residues 260–265 lie on the Extracellular side of the membrane; that stretch reads LWNNKC. A helical transmembrane segment spans residues 266 to 286; the sequence is IKFVMLALNAFPSCHSFILIL. The Cytoplasmic portion of the chain corresponds to 287 to 314; the sequence is GNSKLQQTAVRLLWHLRNYTKTPNPLPL.

This sequence belongs to the G-protein coupled receptor T2R family.

The protein localises to the membrane. In terms of biological role, receptor that may play a role in the perception of bitterness and is gustducin-linked. May play a role in sensing the chemical composition of the gastrointestinal content. The activity of this receptor may stimulate alpha gustducin, mediate PLC-beta-2 activation and lead to the gating of TRPM5. The polypeptide is Taste receptor type 2 member 42 (TAS2R42) (Homo sapiens (Human)).